Here is a 213-residue protein sequence, read N- to C-terminus: Redox-sensing transcriptional repressor Rex (213 aa).

The H-T-H motif DNA-binding region spans 18-57 (LYYRIFKRFHAEKIERANSKQIAEAIGIDSATVRRDFSYF). 92–97 (GIGNMG) serves as a coordination point for NAD(+).

This sequence belongs to the transcriptional regulatory Rex family. Homodimer.

It is found in the cytoplasm. Its function is as follows. Modulates transcription in response to changes in cellular NADH/NAD(+) redox state. Binds to the promoter of the aldehyde-alcohol dehydrogenase adhE gene. Functions as a redox-dependent repressor of adhE expression. The protein is Redox-sensing transcriptional repressor Rex of Streptococcus pneumoniae (strain ATCC BAA-255 / R6).